A 245-amino-acid polypeptide reads, in one-letter code: Adenosylcobinamide-GDP ribazoletransferase (245 aa).

Transmembrane regions (helical) follow at residues 35–55 (WFPL…ALGL), 108–128 (IGAF…IGAH), 137–157 (GVLI…AALV), 176–196 (IAIG…TPVM), 197–217 (TTVT…HLAR), and 222–242 (INGD…LLAA).

This sequence belongs to the CobS family. The cofactor is Mg(2+).

It is found in the cell inner membrane. The enzyme catalyses alpha-ribazole + adenosylcob(III)inamide-GDP = adenosylcob(III)alamin + GMP + H(+). The catalysed reaction is alpha-ribazole 5'-phosphate + adenosylcob(III)inamide-GDP = adenosylcob(III)alamin 5'-phosphate + GMP + H(+). It participates in cofactor biosynthesis; adenosylcobalamin biosynthesis; adenosylcobalamin from cob(II)yrinate a,c-diamide: step 7/7. Functionally, joins adenosylcobinamide-GDP and alpha-ribazole to generate adenosylcobalamin (Ado-cobalamin). Also synthesizes adenosylcobalamin 5'-phosphate from adenosylcobinamide-GDP and alpha-ribazole 5'-phosphate. This Nitratidesulfovibrio vulgaris (strain DP4) (Desulfovibrio vulgaris) protein is Adenosylcobinamide-GDP ribazoletransferase.